The following is a 792-amino-acid chain: Ribosome biogenesis protein BOP1 homolog (792 aa).

Residues 1–11 (MTKKRTVKRKV) are compositionally biased toward basic residues. Residues 1-167 (MTKKRTVKRK…ESDTSDEEDI (167 aa)) are disordered. 4 stretches are compositionally biased toward acidic residues: residues 44–53 (EDTTDDEGID), 60–72 (SSED…DEEG), 82–117 (EAEE…ESDA), and 157–166 (EESDTSDEED). WD repeat units lie at residues 453–494 (GHTD…RTIE), 496–534 (NDVV…KLLI), 578–620 (THFK…SQIP), 623–661 (KSKG…LIKK), 664–703 (TNSK…KPYQ), 707–746 (LHRN…DLLQ), and 762–792 (RDEF…RLYT).

This sequence belongs to the WD repeat BOP1/ERB1 family.

The protein localises to the nucleus. The protein resides in the nucleolus. Its subcellular location is the nucleoplasm. Required for maturation of ribosomal RNAs and formation of the large ribosomal subunit. The sequence is that of Ribosome biogenesis protein BOP1 homolog from Drosophila mojavensis (Fruit fly).